Reading from the N-terminus, the 390-residue chain is Putative glutamate--cysteine ligase 2 (390 aa).

The protein belongs to the glutamate--cysteine ligase type 2 family. YbdK subfamily.

The enzyme catalyses L-cysteine + L-glutamate + ATP = gamma-L-glutamyl-L-cysteine + ADP + phosphate + H(+). ATP-dependent carboxylate-amine ligase which exhibits weak glutamate--cysteine ligase activity. This Chloroflexus aggregans (strain MD-66 / DSM 9485) protein is Putative glutamate--cysteine ligase 2.